Reading from the N-terminus, the 506-residue chain is 2-isopropylmalate synthase (506 aa).

Residues I4–K266 enclose the Pyruvate carboxyltransferase domain. The Mn(2+) site is built by D13, H201, H203, and N237. The tract at residues N390 to K506 is regulatory domain.

This sequence belongs to the alpha-IPM synthase/homocitrate synthase family. LeuA type 1 subfamily. As to quaternary structure, homodimer. Mn(2+) is required as a cofactor.

Its subcellular location is the cytoplasm. It catalyses the reaction 3-methyl-2-oxobutanoate + acetyl-CoA + H2O = (2S)-2-isopropylmalate + CoA + H(+). Its pathway is amino-acid biosynthesis; L-leucine biosynthesis; L-leucine from 3-methyl-2-oxobutanoate: step 1/4. In terms of biological role, catalyzes the condensation of the acetyl group of acetyl-CoA with 3-methyl-2-oxobutanoate (2-ketoisovalerate) to form 3-carboxy-3-hydroxy-4-methylpentanoate (2-isopropylmalate). The chain is 2-isopropylmalate synthase from Bacillus cereus (strain ZK / E33L).